We begin with the raw amino-acid sequence, 294 residues long: MYFQDIIFMLQKYWSSRGCVIAQPMDIECGAGTFNPATFLRVIGPEPWSVAYIEPSRRPTDGRYGENPNRLQSYFQFQVVLKPSPDDIIEQYLGSLQILGIDSTLHDIRFVEDDWESPTLGAWGLGWEIWLDGMEVTQFTYFQQVGGIDLEPISVELTYGLERLAMYLQEKDSVYDLQWNEYVTYGQMYHQNEVEQSSYNFDESDVSMLLKLFKDFDNECRQLIKKGFVWPAYDYCLKCSHTFNLLDARGAISTTERASYISKVRALASSIAKLYALQREKMGYPMLLKGSGEI.

This sequence belongs to the class-II aminoacyl-tRNA synthetase family. Tetramer of two alpha and two beta subunits.

The protein localises to the cytoplasm. The enzyme catalyses tRNA(Gly) + glycine + ATP = glycyl-tRNA(Gly) + AMP + diphosphate. The protein is Glycine--tRNA ligase alpha subunit of Lawsonia intracellularis (strain PHE/MN1-00).